The sequence spans 229 residues: Endonuclease V (229 aa).

It belongs to the endonuclease V family.

It is found in the cytoplasm. It carries out the reaction Endonucleolytic cleavage at apurinic or apyrimidinic sites to products with a 5'-phosphate.. Its function is as follows. DNA repair enzyme involved in the repair of deaminated bases. Selectively cleaves double-stranded DNA at the second phosphodiester bond 3' to a deoxyinosine leaving behind the intact lesion on the nicked DNA. The polypeptide is Endonuclease V (Methanopyrus kandleri (strain AV19 / DSM 6324 / JCM 9639 / NBRC 100938)).